Consider the following 402-residue polypeptide: Cysteine desulfurase NifS (402 aa).

Pyridoxal 5'-phosphate contacts are provided by residues 72 to 73 (GT), N151, Q179, and 199 to 201 (CGH). Residue K202 is modified to N6-(pyridoxal phosphate)lysine. T237 is a binding site for pyridoxal 5'-phosphate. The active-site Cysteine persulfide intermediate is the C325. Residue C325 participates in [2Fe-2S] cluster binding.

It belongs to the class-V pyridoxal-phosphate-dependent aminotransferase family. NifS/IscS subfamily. In terms of assembly, homodimer. The cofactor is pyridoxal 5'-phosphate.

It catalyses the reaction (sulfur carrier)-H + L-cysteine = (sulfur carrier)-SH + L-alanine. Its activity is regulated as follows. Inhibited by equimolar concentrations of p-chloromercuribenzoic acid, iodoacetamide or N-ethylmaleimide. Functionally, catalyzes the removal of elemental sulfur atoms from cysteine to produce alanine. Seems to participate in the biosynthesis of the nitrogenase metalloclusters by providing the inorganic sulfur required for the Fe-S core formation. This is Cysteine desulfurase NifS from Azotobacter vinelandii.